The primary structure comprises 329 residues: Trem-like transcript 2 protein (329 aa).

The first 24 residues, 1-24, serve as a signal peptide directing secretion; the sequence is MEPWPLTFLLLLLLLLWLQGCVSG. The region spanning 25 to 126 is the Ig-like V-type domain; sequence HSNENLYRKV…HFYPLVGFQL (102 aa). Residues 25-270 lie on the Extracellular side of the membrane; sequence HSNENLYRKV…NRSQETYIPA (246 aa). 2 cysteine pairs are disulfide-bonded: cysteine 46–cysteine 110 and cysteine 61–cysteine 68. Positions 202–259 are disordered; that stretch reads FIDTSGTVTEPERNTESQPATLSPSNARSFSADPVTTSTMSRHQSSSLSTTGTCHPLT. Polar residues predominate over residues 217-259; sequence ESQPATLSPSNARSFSADPVTTSTMSRHQSSSLSTTGTCHPLT. Residue asparagine 261 is glycosylated (N-linked (GlcNAc...) asparagine). A helical transmembrane segment spans residues 271 to 291; sequence MVVVLTFLPAPVVLVVAYGFW. Residues 292–329 lie on the Cytoplasmic side of the membrane; sequence KKRHMGRYNLGSNYAKPWIHLPEGPETPWKPAWSKITQ.

As to quaternary structure, interacts with CD276 and this interaction enhances T-cell activation. Detected in B-lymphocytes and macrophages. Detected in spleen, lymph nodes, blood, bone marrow and cells from the peritoneal cavity (at protein level).

Its subcellular location is the cell membrane. Its function is as follows. Cell surface receptor that may play a role in the innate and adaptive immune response. Acts as a counter-receptor for CD276 and interaction with CD276 on T-cells enhances T-cell activation. The sequence is that of Trem-like transcript 2 protein (Treml2) from Mus musculus (Mouse).